A 553-amino-acid chain; its full sequence is Urocanate hydratase (553 aa).

Residues 45–46 (GG), Gln123, 169–171 (GMG), Asp189, Arg194, 235–236 (NA), 256–260 (QTSAH), 266–267 (YV), Tyr315, and Gly485 contribute to the NAD(+) site.

This sequence belongs to the urocanase family. NAD(+) is required as a cofactor.

It localises to the cytoplasm. The enzyme catalyses 4-imidazolone-5-propanoate = trans-urocanate + H2O. Its pathway is amino-acid degradation; L-histidine degradation into L-glutamate; N-formimidoyl-L-glutamate from L-histidine: step 2/3. Functionally, catalyzes the conversion of urocanate to 4-imidazolone-5-propionate. In Staphylococcus saprophyticus subsp. saprophyticus (strain ATCC 15305 / DSM 20229 / NCIMB 8711 / NCTC 7292 / S-41), this protein is Urocanate hydratase.